The sequence spans 370 residues: MRSGRYIGVMSGTSLDGVDVVLAAIDEHTVAQQASYCHPIPQDIKMAILGMCQGQAVTLSALGQLDTRLGILFAEAVLTLLKETELRAQDITAIGCHGQTVWHEPTGDAPCTLQIGDNNRVAALTGITTVGDFRRRDLAYGGQGAPLVPSFHHALLLHPVERRIVLNIGGIANLSLLVPGAPVRGYDTGPGNMLLDAWIWRHCAQPYDKDAMWAMSGQVNPLLLRRMLTDPYFALRAPKSTGREYFNLSWLERMLAGLPPMAPQDVQATLVELTAMSIAEQVLLVGGCERLLVCGGGARNPLIMTRLSALLPGIEVSTTDECGVSGDDMEALAFAWLASRTLSGLSGNLPSVTGASQETVLGAIYPVNAD.

12 to 19 is an ATP binding site; it reads GTSLDGVD.

Belongs to the anhydro-N-acetylmuramic acid kinase family.

The enzyme catalyses 1,6-anhydro-N-acetyl-beta-muramate + ATP + H2O = N-acetyl-D-muramate 6-phosphate + ADP + H(+). The protein operates within amino-sugar metabolism; 1,6-anhydro-N-acetylmuramate degradation. It participates in cell wall biogenesis; peptidoglycan recycling. Functionally, catalyzes the specific phosphorylation of 1,6-anhydro-N-acetylmuramic acid (anhMurNAc) with the simultaneous cleavage of the 1,6-anhydro ring, generating MurNAc-6-P. Is required for the utilization of anhMurNAc either imported from the medium or derived from its own cell wall murein, and thus plays a role in cell wall recycling. The protein is Anhydro-N-acetylmuramic acid kinase of Pectobacterium carotovorum subsp. carotovorum (strain PC1).